The chain runs to 309 residues: uncharacterized protein (309 aa).

To S.pombe SpAC14C4.04.

This is an uncharacterized protein from Schizosaccharomyces pombe (strain 972 / ATCC 24843) (Fission yeast).